The chain runs to 113 residues: Protein FMC1 homolog (113 aa).

The tract at residues 94 to 113 (SAGLVGLQLPHQPGGKGWEP) is disordered.

This sequence belongs to the FMC1 family. Interacts with ATPAF2.

Its subcellular location is the mitochondrion. In terms of biological role, plays a role in the assembly/stability of the mitochondrial membrane ATP synthase (F(1)F(0) ATP synthase or Complex V). The protein is Protein FMC1 homolog of Rattus norvegicus (Rat).